We begin with the raw amino-acid sequence, 70 residues long: Conotoxin Pl171 (70 aa).

The signal sequence occupies residues 1–21; sequence MGMRMMFTMILLVVLVTTVVS. 2 disulfides stabilise this stretch: C54/C61 and C55/C67. Phenylalanine amide is present on F69.

Belongs to the conotoxin A superfamily. Expressed by the venom duct.

The protein resides in the secreted. Probable neurotoxin with unknown target. Possibly targets ion channels. This chain is Conotoxin Pl171, found in Conus planorbis (Planorbis cone).